A 488-amino-acid polypeptide reads, in one-letter code: MKKAIIIGSGIAGLAAALRLKKKGYQVSVFEKNDYAGGKLHAIELGGYRFDLGPSLFTLPHLIDELHQLFPDVEIDFNYIKKKTACHYFWEDGTSFEAPADLENFAVKAAEIFDEKQNTLSKYLQNSKMKYESTKSLFLEKSLHKSNTYFSKQTLKAILKIPFLGINNTLDQENKKFSNPKLNQLFNRYATYNGSSPYLTPGIMSMIPYLELGLGTYYPQGGMHRISQSLFELAQKVGVEFRFRKNVKKINHSNNKVTGVTTEKGTHDADIVLCNMDVFPTYRQLLQDIKAPEKTLKQERSSSALIFYWGIKKSFPQLDLHNILFSENYKAEFEAIFNNKSLYEDPTVYINITSKQSPQDAPKGCENWFVMINTPGDYGQNWENLVIKAKKNILSKIKRCLNIDVEELIDVEYVLTPQGIEKNTSSYRGALYGAASNNKFAAFLRHPNFNKTIGNLYHVGGSVHPGGGIPLCLLSAKITADLIPNTNA.

FAD-binding positions include glutamate 31, lysine 39, 55–56 (SL), valine 247, asparagine 275, leucine 431, glycine 461, and 468–469 (GI).

It belongs to the carotenoid/retinoid oxidoreductase family. Monomer.

It catalyses the reaction rhodopin + A = (3E)-3,4-didehydrorhodopin + AH2. It carries out the reaction 1'-hydroxy-gamma-carotene + A = 1'-hydroxytorulene + AH2. The catalysed reaction is 1-hydroxy-all-trans-1,2-dihydro-neurosporene + A = demethylspheroidene + AH2. The enzyme catalyses 1,1'-dihydroxy-1,1',2,2'-tetrahydroneurosporene + A = 1'-hydroxy-demethylspheroidene + AH2. It catalyses the reaction 1,1'-dihydroxy-1,1',2,2'-tetrahydrolycopene + A = 1,1'-dihydroxy-3,4-didehydro-1,2-dihydrolycopene + AH2. It participates in carotenoid biosynthesis. Its function is as follows. Catalyzes the introduction of a C-3,4 double bond into 1'-hydroxy-gamma-carotene and rhodopin (1-hydroxylycopene) to yield 1'-hydroxytorulene and (3E)-3,4-didehydrorhodopin, respectively. Can also 1-hydroxy-all-trans-1,2-dihydro-neurosporene, 1,1'-dihydroxy-1,1',2,2'-tetrahydroneurosporene and 1,1'-dihydroxy-1,1',2,2'-tetrahydrolycopene. Probably involved in the synthesis of myxol, a gamma-carotene derivative. May use FAD as a proton acceptor. This is 1-hydroxycarotenoid 3,4-desaturase from Flavobacterium sp. (strain P99-3).